A 138-amino-acid polypeptide reads, in one-letter code: Invertebrate-type lysozyme 6 (138 aa).

An N-terminal signal peptide occupies residues 1–18; that stretch reads MFVKLCGILAFAVTYASS. An I-type lysozyme domain is found at 19 to 138; the sequence is DCLQCICKKE…WNGIKGLGCS (120 aa). 6 disulfide bridges follow: cysteine 20–cysteine 106, cysteine 25–cysteine 31, cysteine 36–cysteine 45, cysteine 58–cysteine 86, cysteine 76–cysteine 82, and cysteine 98–cysteine 120. Glutamate 28 functions as the Proton donor in the catalytic mechanism. Aspartate 39 (nucleophile) is an active-site residue. Residue 51–57 participates in substrate binding; that stretch reads KLSYYKD. Substrate-binding positions include tyrosine 90 and 113 to 115; that span reads HNG.

Belongs to the glycosyl hydrolase 22 family. Type-I lysozyme subfamily. As to expression, expressed in pharyngeal gland cells and duct projections, coelomocytes and intestine.

The enzyme catalyses Hydrolysis of (1-&gt;4)-beta-linkages between N-acetylmuramic acid and N-acetyl-D-glucosamine residues in a peptidoglycan and between N-acetyl-D-glucosamine residues in chitodextrins.. Has bacteriolytic activity against Gram-positive bacteria. The chain is Invertebrate-type lysozyme 6 from Caenorhabditis elegans.